Here is a 376-residue protein sequence, read N- to C-terminus: Protein RecA (376 aa).

An ATP-binding site is contributed by 78–85 (GPESSGKT). Positions 355–376 (PVELVPNVDFDDEADTEADAED) are disordered. Acidic residues predominate over residues 363-376 (DFDDEADTEADAED).

It belongs to the RecA family.

The protein resides in the cytoplasm. In terms of biological role, can catalyze the hydrolysis of ATP in the presence of single-stranded DNA, the ATP-dependent uptake of single-stranded DNA by duplex DNA, and the ATP-dependent hybridization of homologous single-stranded DNAs. It interacts with LexA causing its activation and leading to its autocatalytic cleavage. The sequence is that of Protein RecA from Corynebacterium glutamicum (strain R).